Here is a 330-residue protein sequence, read N- to C-terminus: Cathepsin K (330 aa).

Positions 1–16 (MWGLKVVLLLPVMSSA) are cleaved as a signal peptide. The propeptide at 17–115 (LYPEEILDTQ…TLYIPDWEGR (99 aa)) is activation peptide. Asn104 is a glycosylation site (N-linked (GlcNAc...) asparagine). 3 cysteine pairs are disulfide-bonded: Cys137/Cys178, Cys171/Cys211, and Cys270/Cys319. Cys140 is an active-site residue. Catalysis depends on residues His277 and Asn297.

This sequence belongs to the peptidase C1 family. In terms of tissue distribution, expressed in the thyroid epithelial cells.

It is found in the lysosome. It localises to the secreted. The protein resides in the apical cell membrane. It catalyses the reaction Broad proteolytic activity. With small-molecule substrates and inhibitors, the major determinant of specificity is P2, which is preferably Leu, Met &gt; Phe, and not Arg.. Thiol protease involved in osteoclastic bone resorption and may participate partially in the disorder of bone remodeling. Displays potent endoprotease activity against fibrinogen at acid pH. May play an important role in extracellular matrix degradation. Involved in the release of thyroid hormone thyroxine (T4) by limited proteolysis of TG/thyroglobulin in the thyroid follicle lumen. The chain is Cathepsin K (CTSK) from Sus scrofa (Pig).